The sequence spans 533 residues: Decreased expression in renal and prostate cancer protein (533 aa).

Basic and acidic residues predominate over residues 1 to 12 (MKEPRIFPRERP). Disordered stretches follow at residues 1–31 (MKEPRIFPRERPTPWTRAPLPPRGRLDGGPV), 67–164 (QNPS…PDPR), 177–259 (MRAG…RAGG), and 299–350 (ASGN…PNSA). S160 is modified (phosphoserine). Positions 299-309 (ASGNMGTNPPT) are enriched in polar residues. R368 is subject to Asymmetric dimethylarginine. At R396 the chain carries Omega-N-methylarginine. Residue S432 is modified to Phosphoserine.

The protein belongs to the DERPC family.

It localises to the nucleus. Functionally, potential tumor suppressor. In Mus musculus (Mouse), this protein is Decreased expression in renal and prostate cancer protein.